Consider the following 540-residue polypeptide: Putative serine protease F56F10.1 (540 aa).

The signal sequence occupies residues 1–16; the sequence is MLRNLLLLLLPLLIEA. Asn58 and Asn87 each carry an N-linked (GlcNAc...) asparagine glycan. Ser182 functions as the Charge relay system in the catalytic mechanism. N-linked (GlcNAc...) asparagine glycans are attached at residues Asn270, Asn300, Asn317, Asn343, Asn441, and Asn449. Asp453 acts as the Charge relay system in catalysis. Residue Asn475 is glycosylated (N-linked (GlcNAc...) asparagine). Catalysis depends on His479, which acts as the Charge relay system.

The protein belongs to the peptidase S28 family.

The chain is Putative serine protease F56F10.1 from Caenorhabditis elegans.